The sequence spans 112 residues: uncharacterized protein (112 aa).

The segment covering 1 to 11 has biased composition (polar residues); the sequence is MAESVASSESL. Residues 1-32 form a disordered region; that stretch reads MAESVASSESLPQMKPEEPESKKSPSREAIPK. A compositionally biased stretch (basic and acidic residues) spans 15 to 31; the sequence is KPEEPESKKSPSREAIP. The helical transmembrane segment at 81–101 threads the bilayer; the sequence is VVFIFMIAIMSMLVIGLVVCG.

It is found in the membrane. This is an uncharacterized protein from Encephalitozoon cuniculi (strain GB-M1) (Microsporidian parasite).